Here is a 159-residue protein sequence, read N- to C-terminus: Na(+)/H(+) antiporter subunit E1 (159 aa).

Transmembrane regions (helical) follow at residues 1–21 (MAVQLVLNFIIAVFWLFVTNS), 27–47 (FVLGFIFGLVLVYLLHRVLPG), 49–69 (FYVITLYRIIKLIIIFLIELI), and 101–121 (WQIVLLSNLITLTPGTVVLGV).

The protein belongs to the CPA3 antiporters (TC 2.A.63) subunit E family. As to quaternary structure, may form a heterooligomeric complex that consists of seven subunits: mnhA1, mnhB1, mnhC1, mnhD1, mnhE1, mnhF1 and mnhG1.

It is found in the cell membrane. Its function is as follows. Mnh complex is a Na(+)/H(+) antiporter involved in Na(+) excretion. The polypeptide is Na(+)/H(+) antiporter subunit E1 (mnhE1) (Staphylococcus aureus (strain bovine RF122 / ET3-1)).